Here is a 93-residue protein sequence, read N- to C-terminus: uncharacterized protein (93 aa).

The signal sequence occupies residues 1 to 11 (MALMVLMALVG). Residue C12 is the site of N-palmitoyl cysteine attachment. The S-diacylglycerol cysteine moiety is linked to residue C12.

It localises to the cell membrane. This is an uncharacterized protein from Escherichia coli O6:K15:H31 (strain 536 / UPEC).